Consider the following 371-residue polypeptide: Cytochrome b (371 aa).

Helical transmembrane passes span 25 to 45, 69 to 90, 105 to 125, and 170 to 190; these read FGSM…FLSM, WMMQ…YMHI, WLSG…GYVL, and FFAL…VHIM. Heme b contacts are provided by histidine 75 and histidine 89. 2 residues coordinate heme b: histidine 174 and histidine 188. Residue histidine 193 participates in a ubiquinone binding. 4 consecutive transmembrane segments (helical) span residues 218-238, 280-300, 312-332, and 339-358; these read YKDL…VSFF, LGGA…PFTH, LMQF…WTAT, and FTTI…MSNP.

It belongs to the cytochrome b family. The cytochrome bc1 complex contains 3 respiratory subunits (MT-CYB, CYC1 and UQCRFS1), 2 core proteins (UQCRC1 and UQCRC2) and probably 6 low-molecular weight proteins. The cofactor is heme b.

The protein resides in the mitochondrion inner membrane. Functionally, component of the ubiquinol-cytochrome c reductase complex (complex III or cytochrome b-c1 complex) that is part of the mitochondrial respiratory chain. The b-c1 complex mediates electron transfer from ubiquinol to cytochrome c. Contributes to the generation of a proton gradient across the mitochondrial membrane that is then used for ATP synthesis. This is Cytochrome b (MT-CYB) from Candoia carinata (Papuan tree boa).